The sequence spans 162 residues: Regulator of sigma D (162 aa).

Belongs to the Rsd/AlgQ family. Interacts with RpoD.

It localises to the cytoplasm. Binds RpoD and negatively regulates RpoD-mediated transcription activation by preventing the interaction between the primary sigma factor RpoD with the catalytic core of the RNA polymerase and with promoter DNA. May be involved in replacement of the RNA polymerase sigma subunit from RpoD to RpoS during the transition from exponential growth to the stationary phase. The sequence is that of Regulator of sigma D from Salmonella typhi.